An 843-amino-acid chain; its full sequence is Urease (843 aa).

The Urease domain maps to 400–843 (GGIDCHVHFI…VPLSRNYFLF (444 aa)). The Ni(2+) site is built by His-405, His-407, and Lys-488. Lys-488 carries the N6-carboxylysine modification. Position 490 (His-490) interacts with substrate. 2 residues coordinate Ni(2+): His-517 and His-543. His-591 functions as the Proton donor in the catalytic mechanism. Ni(2+) is bound at residue Asp-631.

This sequence in the C-terminal section; belongs to the metallo-dependent hydrolases superfamily. Urease alpha subunit family. As to quaternary structure, homohexamer. Other oligomeric forms may exist depending on pH and presence of salts. The cofactor is Ni(2+). Post-translationally, carboxylation allows a single lysine to coordinate two nickel ions.

It catalyses the reaction urea + 2 H2O + H(+) = hydrogencarbonate + 2 NH4(+). Its pathway is nitrogen metabolism; urea degradation; CO(2) and NH(3) from urea (urease route): step 1/1. Functionally, urea hydrolase involved in nitrogen recycling from ureide, purine, and arginine catabolism. In Oryza sativa subsp. indica (Rice), this protein is Urease.